Here is a 217-residue protein sequence, read N- to C-terminus: Ribonuclease HII (217 aa).

The RNase H type-2 domain occupies 12–201; the sequence is DLVAGVDEVG…VRTAHEARAA (190 aa). Asp18, Glu19, and Asp110 together coordinate a divalent metal cation.

The protein belongs to the RNase HII family. It depends on Mn(2+) as a cofactor. Requires Mg(2+) as cofactor.

Its subcellular location is the cytoplasm. It catalyses the reaction Endonucleolytic cleavage to 5'-phosphomonoester.. Endonuclease that specifically degrades the RNA of RNA-DNA hybrids. This chain is Ribonuclease HII, found in Pseudomonas syringae pv. tomato (strain ATCC BAA-871 / DC3000).